A 386-amino-acid polypeptide reads, in one-letter code: Succinate--CoA ligase [ADP-forming] subunit beta (386 aa).

Residues 9-244 enclose the ATP-grasp domain; it reads KALFREHGIP…ETQEDAREAR (236 aa). Residues Lys46, 53-55, Glu99, Thr102, and Glu107 each bind ATP; that span reads GRG. Mg(2+)-binding residues include Asn199 and Asp213. Substrate contacts are provided by residues Asn264 and 321–323; that span reads GIV.

This sequence belongs to the succinate/malate CoA ligase beta subunit family. Heterotetramer of two alpha and two beta subunits. It depends on Mg(2+) as a cofactor.

The enzyme catalyses succinate + ATP + CoA = succinyl-CoA + ADP + phosphate. It carries out the reaction GTP + succinate + CoA = succinyl-CoA + GDP + phosphate. It participates in carbohydrate metabolism; tricarboxylic acid cycle; succinate from succinyl-CoA (ligase route): step 1/1. Succinyl-CoA synthetase functions in the citric acid cycle (TCA), coupling the hydrolysis of succinyl-CoA to the synthesis of either ATP or GTP and thus represents the only step of substrate-level phosphorylation in the TCA. The beta subunit provides nucleotide specificity of the enzyme and binds the substrate succinate, while the binding sites for coenzyme A and phosphate are found in the alpha subunit. The chain is Succinate--CoA ligase [ADP-forming] subunit beta from Thioalkalivibrio sulfidiphilus (strain HL-EbGR7).